The following is a 224-amino-acid chain: Heme response regulator HssR (224 aa).

Positions Lys-3–Leu-116 constitute a Response regulatory domain. Asp-52 carries the 4-aspartylphosphate modification. Positions Gln-124–Thr-222 form a DNA-binding region, ompR/PhoB-type.

Phosphorylated by HssS.

It is found in the cytoplasm. Its function is as follows. Member of the two-component regulatory system HssS/HssR involved in intracellular heme homeostasis and tempering of staphylococcal virulence. Phosphorylated HssR binds to a direct repeat sequence within hrtAB promoter and activates the expression of hrtAB, an efflux pump, in response to extracellular heme, hemin, hemoglobin or blood. The sequence is that of Heme response regulator HssR (hssR) from Staphylococcus haemolyticus (strain JCSC1435).